The primary structure comprises 244 residues: Transcriptional activator protein FnrA (244 aa).

The 74-residue stretch at 159–232 folds into the HTH crp-type domain; it reads KTADERIATF…GKEVRILDSI (74 aa). A DNA-binding region (H-T-H motif) is located at residues 192–211; sequence RNEIGNYLGLAVETVSRVFT.

Transcriptional regulator of arginine deiminase. This is Transcriptional activator protein FnrA (fnrA) from Stutzerimonas stutzeri (Pseudomonas stutzeri).